The primary structure comprises 120 residues: Large ribosomal subunit protein bL17 (120 aa).

Belongs to the bacterial ribosomal protein bL17 family. As to quaternary structure, part of the 50S ribosomal subunit. Contacts protein L32.

The protein is Large ribosomal subunit protein bL17 of Halalkalibacterium halodurans (strain ATCC BAA-125 / DSM 18197 / FERM 7344 / JCM 9153 / C-125) (Bacillus halodurans).